Here is a 252-residue protein sequence, read N- to C-terminus: GTP cyclohydrolase 1 type 2 homolog (252 aa).

H65, H66, D103, H220, and E224 together coordinate a divalent metal cation.

Belongs to the GTP cyclohydrolase I type 2/NIF3 family. As to quaternary structure, homohexamer.

In Pseudomonas aeruginosa (strain ATCC 15692 / DSM 22644 / CIP 104116 / JCM 14847 / LMG 12228 / 1C / PRS 101 / PAO1), this protein is GTP cyclohydrolase 1 type 2 homolog.